The sequence spans 654 residues: 4-hydroxy-3-methylbut-2-en-1-yl diphosphate synthase (flavodoxin) (654 aa).

[4Fe-4S] cluster is bound by residues C557, C560, C591, and E598.

It belongs to the IspG family. Requires [4Fe-4S] cluster as cofactor.

It catalyses the reaction (2E)-4-hydroxy-3-methylbut-2-enyl diphosphate + oxidized [flavodoxin] + H2O + 2 H(+) = 2-C-methyl-D-erythritol 2,4-cyclic diphosphate + reduced [flavodoxin]. The protein operates within isoprenoid biosynthesis; isopentenyl diphosphate biosynthesis via DXP pathway; isopentenyl diphosphate from 1-deoxy-D-xylulose 5-phosphate: step 5/6. Converts 2C-methyl-D-erythritol 2,4-cyclodiphosphate (ME-2,4cPP) into 1-hydroxy-2-methyl-2-(E)-butenyl 4-diphosphate. This chain is 4-hydroxy-3-methylbut-2-en-1-yl diphosphate synthase (flavodoxin), found in Protochlamydia amoebophila (strain UWE25).